A 508-amino-acid chain; its full sequence is Glutamyl-tRNA(Gln) amidotransferase subunit B, mitochondrial (508 aa).

It belongs to the GatB/GatE family. GatB subfamily. As to quaternary structure, subunit of the heterotrimeric GatFAB amidotransferase (AdT) complex, composed of A, B and F subunits.

It is found in the mitochondrion. The catalysed reaction is L-glutamyl-tRNA(Gln) + L-glutamine + ATP + H2O = L-glutaminyl-tRNA(Gln) + L-glutamate + ADP + phosphate + H(+). Its function is as follows. Allows the formation of correctly charged Gln-tRNA(Gln) through the transamidation of misacylated Glu-tRNA(Gln) in the mitochondria. The reaction takes place in the presence of glutamine and ATP through an activated gamma-phospho-Glu-tRNA(Gln). This chain is Glutamyl-tRNA(Gln) amidotransferase subunit B, mitochondrial, found in Scheffersomyces stipitis (strain ATCC 58785 / CBS 6054 / NBRC 10063 / NRRL Y-11545) (Yeast).